A 468-amino-acid polypeptide reads, in one-letter code: Uronate isomerase (468 aa).

It belongs to the metallo-dependent hydrolases superfamily. Uronate isomerase family.

The catalysed reaction is D-glucuronate = D-fructuronate. It catalyses the reaction aldehydo-D-galacturonate = keto-D-tagaturonate. The protein operates within carbohydrate metabolism; pentose and glucuronate interconversion. The sequence is that of Uronate isomerase from Bacteroides thetaiotaomicron (strain ATCC 29148 / DSM 2079 / JCM 5827 / CCUG 10774 / NCTC 10582 / VPI-5482 / E50).